The sequence spans 273 residues: Ethanolamine ammonia-lyase small subunit (273 aa).

Residues valine 164, glutamate 185, and cysteine 214 each coordinate adenosylcob(III)alamin.

Belongs to the EutC family. The basic unit is a heterodimer which dimerizes to form tetramers. The heterotetramers trimerize; 6 large subunits form a core ring with 6 small subunits projecting outwards. The cofactor is adenosylcob(III)alamin.

The protein localises to the bacterial microcompartment. The catalysed reaction is ethanolamine = acetaldehyde + NH4(+). The protein operates within amine and polyamine degradation; ethanolamine degradation. Catalyzes the deamination of various vicinal amino-alcohols to oxo compounds. Allows this organism to utilize ethanolamine as the sole source of nitrogen and carbon in the presence of external vitamin B12. The polypeptide is Ethanolamine ammonia-lyase small subunit (Pseudomonas aeruginosa (strain UCBPP-PA14)).